Here is a 540-residue protein sequence, read N- to C-terminus: Probable quinate permease (540 aa).

Topologically, residues 1 to 22 (MSILALVEDRPTPKEVYNWRIY) are cytoplasmic. A helical membrane pass occupies residues 23–43 (LLAAVASFTSCMIGYDSAFIG). Residues 44-74 (TTLALGSFREEFEFTTMEPAAVNRVSANIVS) lie on the Extracellular side of the membrane. A helical transmembrane segment spans residues 75–95 (CYQAGAFFGAFFAYPIGHFWG). Residues 96 to 97 (RK) lie on the Cytoplasmic side of the membrane. A helical membrane pass occupies residues 98–118 (WGLLSAAAIFTLGAGLMLGAN). Topologically, residues 119–130 (GDRGLGLIYGGR) are extracellular. A helical transmembrane segment spans residues 131-151 (VLAGIGVGAGSNITPIYISEL). The Cytoplasmic portion of the chain corresponds to 152-157 (APPSIR). The helical transmembrane segment at 158 to 178 (GHLVGVYELGWQIGGLVGFWI) threads the bilayer. Residues 179–193 (NYGVSETLAPSHKQW) lie on the Extracellular side of the membrane. The chain crosses the membrane as a helical span at residues 194–214 (IIPFAVQLIPSGLLLIGAVFL). The Cytoplasmic portion of the chain corresponds to 215–285 (RESPRWLFSS…AGTNKKVMYR (71 aa)). A helical membrane pass occupies residues 286-306 (LFLGSMLFFWQNGSGINAINY). The Extracellular segment spans residues 307–325 (YSPTVFKSIGLRGTNTGMF). A helical membrane pass occupies residues 326-346 (STGIFGVVKTVVTFIWLLYLI). Residues 347–352 (DRMGRR) are Cytoplasmic-facing. The chain crosses the membrane as a helical span at residues 353-373 (LLLLVGAAGASVCLWIVGAYI). Over 374-387 (KIANPAKNGNGEMT) the chain is Extracellular. The helical transmembrane segment at 388–408 (GGGIAAMFFFYLYTVFYTPSW) threads the bilayer. At 409–456 (NGTPWVMNSEMFEPNMRSLAQACAAASNWLWNFLISRFTPQMFDKMGY) the chain is on the cytoplasmic side. Residues 457 to 477 (GVWFFFASLMLCSIVIVFFLI) traverse the membrane as a helical segment. At 478–540 (PETKGIPLES…RLESVQPKEA (63 aa)) the chain is on the extracellular side. The tract at residues 519–540 (IEESGYTKSGEQRLESVQPKEA) is disordered. Residues 528 to 540 (GEQRLESVQPKEA) are compositionally biased toward basic and acidic residues.

This sequence belongs to the major facilitator superfamily. Sugar transporter (TC 2.A.1.1) family. In terms of assembly, interacts with creB. Post-translationally, ubiquitinated. Deubiquitinated by creB, probably to control its activity or amount.

The protein resides in the cell membrane. Its function is as follows. Integral membrane transporter that imports quinic acid to be catabolized as a carbon source. The sequence is that of Probable quinate permease (qutD) from Aspergillus clavatus (strain ATCC 1007 / CBS 513.65 / DSM 816 / NCTC 3887 / NRRL 1 / QM 1276 / 107).